Consider the following 1210-residue polypeptide: Ice nucleation protein (1210 aa).

The interval 165–1156 (AVYGSTLTGA…LSGGENSTLI (992 aa)) is octapeptide periodicity.

The protein belongs to the bacterial ice nucleation protein family.

The protein resides in the cell outer membrane. Ice nucleation proteins enable bacteria to nucleate crystallization in supercooled water. The sequence is that of Ice nucleation protein (inaW) from Pseudomonas fluorescens.